The following is a 508-amino-acid chain: Light-independent protochlorophyllide reductase subunit B (508 aa).

Position 36 (Asp-36) interacts with [4Fe-4S] cluster. Asp-294 (proton donor) is an active-site residue. Position 429-430 (429-430 (GM)) interacts with substrate.

It belongs to the ChlB/BchB/BchZ family. As to quaternary structure, protochlorophyllide reductase is composed of three subunits; ChlL, ChlN and ChlB. Forms a heterotetramer of two ChlB and two ChlN subunits. The cofactor is [4Fe-4S] cluster.

It carries out the reaction chlorophyllide a + oxidized 2[4Fe-4S]-[ferredoxin] + 2 ADP + 2 phosphate = protochlorophyllide a + reduced 2[4Fe-4S]-[ferredoxin] + 2 ATP + 2 H2O. Its pathway is porphyrin-containing compound metabolism; chlorophyll biosynthesis (light-independent). Functionally, component of the dark-operative protochlorophyllide reductase (DPOR) that uses Mg-ATP and reduced ferredoxin to reduce ring D of protochlorophyllide (Pchlide) to form chlorophyllide a (Chlide). This reaction is light-independent. The NB-protein (ChlN-ChlB) is the catalytic component of the complex. The protein is Light-independent protochlorophyllide reductase subunit B of Synechocystis sp. (strain ATCC 27184 / PCC 6803 / Kazusa).